The primary structure comprises 575 residues: Homocysteine/cysteine synthase (575 aa).

Lysine 376 bears the N6-(pyridoxal phosphate)lysine mark.

Belongs to the trans-sulfuration enzymes family. MET7 subfamily. Pyridoxal 5'-phosphate serves as cofactor.

The protein resides in the cytoplasm. The catalysed reaction is O-acetyl-L-homoserine + methanethiol = L-methionine + acetate + H(+). It catalyses the reaction O-acetyl-L-homoserine + hydrogen sulfide = L-homocysteine + acetate. The enzyme catalyses O-acetyl-L-serine + hydrogen sulfide = L-cysteine + acetate. The protein operates within amino-acid biosynthesis; L-methionine biosynthesis via de novo pathway; L-homocysteine from O-acetyl-L-homoserine. Functionally, plays a role in inorganic sulfur assimilation during sulfur-limited conditions; catalyzes the conversion of O-acetyl-L-homoserine (OAH) into homocysteine in the methionine biosynthesis pathway. Also catalyzes the conversion of O-acetylserine (OAS) into cysteine, the last step in the cysteine biosynthesis pathway. However, it seems that in S.cerevisiae cysteine biosynthesis occurs exclusively through the cystathionine pathway and not via direct incorporation of sulfur into OAS. It therefore has no metabolic role in cysteine biosynthesis and may only have a regulatory role controlling OAS levels. The chain is Homocysteine/cysteine synthase from Saccharomyces cerevisiae (strain ATCC 204508 / S288c) (Baker's yeast).